The following is a 391-amino-acid chain: Recombination and repair protein (391 aa).

Residue 60–67 (GPSKSFKS) participates in ATP binding. Positions 364–374 (KSPESKSKSAA) are enriched in basic and acidic residues. The segment at 364–391 (KSPESKSKSAADLETDLEQLSDMEEFNE) is disordered. Positions 376–391 (LETDLEQLSDMEEFNE) are enriched in acidic residues.

Belongs to the RecA family.

In terms of biological role, important in genetic recombination, DNA repair, and replication. Possesses pairing and strand-transfer activity. Interacts with dda and gene 32 proteins. This is Recombination and repair protein (UVSX) from Enterobacteria phage T4 (Bacteriophage T4).